The primary structure comprises 251 residues: Phosphate import ATP-binding protein PstB (251 aa).

The ABC transporter domain occupies 5–246 (IKIRGVNFFY…PKDKRTEDYI (242 aa)). 37-44 (GPSGCGKS) is a binding site for ATP.

The protein belongs to the ABC transporter superfamily. Phosphate importer (TC 3.A.1.7) family. In terms of assembly, the complex is composed of two ATP-binding proteins (PstB), two transmembrane proteins (PstC and PstA) and a solute-binding protein (PstS).

The protein localises to the cell membrane. The enzyme catalyses phosphate(out) + ATP + H2O = ADP + 2 phosphate(in) + H(+). Part of the ABC transporter complex PstSACB involved in phosphate import. Responsible for energy coupling to the transport system. This chain is Phosphate import ATP-binding protein PstB, found in Dehalococcoides mccartyi (strain ATCC BAA-2266 / KCTC 15142 / 195) (Dehalococcoides ethenogenes (strain 195)).